We begin with the raw amino-acid sequence, 694 residues long: Elongation factor G (694 aa).

The tr-type G domain maps to 8–283; the sequence is ERYRNIGIMA…AVIDYLPAPV (276 aa). Residues 17–24, 81–85, and 135–138 contribute to the GTP site; these read AHIDAGKT, DTPGH, and NKMD.

This sequence belongs to the TRAFAC class translation factor GTPase superfamily. Classic translation factor GTPase family. EF-G/EF-2 subfamily.

It is found in the cytoplasm. In terms of biological role, catalyzes the GTP-dependent ribosomal translocation step during translation elongation. During this step, the ribosome changes from the pre-translocational (PRE) to the post-translocational (POST) state as the newly formed A-site-bound peptidyl-tRNA and P-site-bound deacylated tRNA move to the P and E sites, respectively. Catalyzes the coordinated movement of the two tRNA molecules, the mRNA and conformational changes in the ribosome. The protein is Elongation factor G of Paramagnetospirillum magneticum (strain ATCC 700264 / AMB-1) (Magnetospirillum magneticum).